Consider the following 1009-residue polypeptide: Lateral signaling target protein 2 homolog (1009 aa).

Disordered stretches follow at residues 313-460, 497-629, and 777-905; these read PVGS…EEQL, ASED…KRCS, and MQRN…TATA. Low complexity-rich tracts occupy residues 327 to 348, 364 to 398, and 406 to 427; these read SSTP…SSSG, QRNN…TPTA, and PSHS…HPPA. The span at 430–458 shows a compositional bias: acidic residues; it reads SDGDDEDEDEEEDEEEDELEDTEDDTDEE. Phosphoserine is present on serine 541. Positions 544-558 are enriched in basic and acidic residues; the sequence is SEPHRDQGETIKSTE. Residues 562–575 show a composition bias toward low complexity; it reads QQQQQQEQQTLQSS. Composition is skewed to basic residues over residues 576–601 and 609–627; these read RQRH…HHST and QPHH…GRKR. The segment covering 780–798 has biased composition (low complexity); sequence NNTIDNPSSSNTSSSSATT. Residue serine 807 is modified to Phosphoserine. The span at 822-878 shows a compositional bias: low complexity; that stretch reads VHQQEQEMQQQQDHQQQQHQHQVQVQLQRQRNNSVGSNTPSSASSTSSSSEQNSPVS. Residues 917–977 form an FYVE-type zinc finger; sequence DGKAPRCMSC…VCRDCYVREV (61 aa). Residues cysteine 923, cysteine 926, cysteine 939, cysteine 942, cysteine 947, cysteine 950, cysteine 969, and cysteine 972 each contribute to the Zn(2+) site.

Belongs to the lst-2 family.

Functionally, negative regulator of epidermal growth factor receptor (EGFR) signaling. This Drosophila persimilis (Fruit fly) protein is Lateral signaling target protein 2 homolog.